A 472-amino-acid polypeptide reads, in one-letter code: Protein nucleotidyltransferase YdiU (472 aa).

ATP contacts are provided by glycine 86, glycine 88, arginine 89, lysine 109, aspartate 121, glycine 122, arginine 172, and arginine 179. Aspartate 244 acts as the Proton acceptor in catalysis. Mg(2+) is bound by residues asparagine 245 and aspartate 254. An ATP-binding site is contributed by aspartate 254.

The protein belongs to the SELO family. The cofactor is Mg(2+). It depends on Mn(2+) as a cofactor.

It catalyses the reaction L-seryl-[protein] + ATP = 3-O-(5'-adenylyl)-L-seryl-[protein] + diphosphate. The catalysed reaction is L-threonyl-[protein] + ATP = 3-O-(5'-adenylyl)-L-threonyl-[protein] + diphosphate. The enzyme catalyses L-tyrosyl-[protein] + ATP = O-(5'-adenylyl)-L-tyrosyl-[protein] + diphosphate. It carries out the reaction L-histidyl-[protein] + UTP = N(tele)-(5'-uridylyl)-L-histidyl-[protein] + diphosphate. It catalyses the reaction L-seryl-[protein] + UTP = O-(5'-uridylyl)-L-seryl-[protein] + diphosphate. The catalysed reaction is L-tyrosyl-[protein] + UTP = O-(5'-uridylyl)-L-tyrosyl-[protein] + diphosphate. Functionally, nucleotidyltransferase involved in the post-translational modification of proteins. It can catalyze the addition of adenosine monophosphate (AMP) or uridine monophosphate (UMP) to a protein, resulting in modifications known as AMPylation and UMPylation. This is Protein nucleotidyltransferase YdiU from Ruegeria pomeroyi (strain ATCC 700808 / DSM 15171 / DSS-3) (Silicibacter pomeroyi).